We begin with the raw amino-acid sequence, 295 residues long: ATP synthase gamma chain (295 aa).

Belongs to the ATPase gamma chain family. As to quaternary structure, F-type ATPases have 2 components, CF(1) - the catalytic core - and CF(0) - the membrane proton channel. CF(1) has five subunits: alpha(3), beta(3), gamma(1), delta(1), epsilon(1). CF(0) has three main subunits: a, b and c.

It localises to the cell inner membrane. Functionally, produces ATP from ADP in the presence of a proton gradient across the membrane. The gamma chain is believed to be important in regulating ATPase activity and the flow of protons through the CF(0) complex. This is ATP synthase gamma chain from Sulfurimonas denitrificans (strain ATCC 33889 / DSM 1251) (Thiomicrospira denitrificans (strain ATCC 33889 / DSM 1251)).